Reading from the N-terminus, the 59-residue chain is Cytochrome b-c1 complex subunit 9, mitochondrial (59 aa).

At 1 to 15 (MSALYNLIFRNNTAF) the chain is on the mitochondrial matrix side. The helical transmembrane segment at 16 to 41 (VGAVFAGAFAFELAYDNGMDKVWDKI) threads the bilayer. The Mitochondrial intermembrane segment spans residues 42-59 (NKGRQWKDIRHKYVEAEE).

Belongs to the UQCR10/QCR9 family. As to quaternary structure, component of the ubiquinol-cytochrome c oxidoreductase (cytochrome b-c1 complex, complex III, CIII), a multisubunit enzyme composed of 10 subunits. The complex is composed of 3 respiratory subunits cytochrome b (cob), cytochrome c1 (cyt-1) and Rieske protein (fes-1), 2 core protein subunits pep and ucr-1, and 5 low-molecular weight protein subunits qcr6, qcr7, qcr8, qcr9 and probably NCU16844/qcr10. The complex exists as an obligatory dimer and forms supercomplexes (SCs) in the inner mitochondrial membrane with NADH-ubiquinone oxidoreductase (complex I, CI) and cytochrome c oxidase (complex IV, CIV), resulting in different assemblies (supercomplexes SCI(1)III(2), SCIII(2)IV(1) and SCIII(2)IV(2) as well as higher order I(x)III(y)IV(z) megacomplexes).

Its subcellular location is the mitochondrion inner membrane. In terms of biological role, component of the ubiquinol-cytochrome c oxidoreductase, a multisubunit transmembrane complex that is part of the mitochondrial electron transport chain which drives oxidative phosphorylation. The respiratory chain contains 3 multisubunit complexes succinate dehydrogenase (complex II, CII), ubiquinol-cytochrome c oxidoreductase (cytochrome b-c1 complex, complex III, CIII) and cytochrome c oxidase (complex IV, CIV), that cooperate to transfer electrons derived from NADH and succinate to molecular oxygen, creating an electrochemical gradient over the inner membrane that drives transmembrane transport and the ATP synthase. The cytochrome b-c1 complex catalyzes electron transfer from ubiquinol to cytochrome c, linking this redox reaction to translocation of protons across the mitochondrial inner membrane, with protons being carried across the membrane as hydrogens on the quinol. In the process called Q cycle, 2 protons are consumed from the matrix, 4 protons are released into the intermembrane space and 2 electrons are passed to cytochrome c. The protein is Cytochrome b-c1 complex subunit 9, mitochondrial (qcr9) of Neurospora crassa (strain ATCC 24698 / 74-OR23-1A / CBS 708.71 / DSM 1257 / FGSC 987).